The chain runs to 436 residues: MTAKQTVTTRDGERIAIVAGLRTPFAKMATNFHGVPAVDLGKMVVNEMLVKHNVDPLLIEQLVYGQVVQMPEAPNIAREIVLGTGMSVHTDAYSVSRACATSFQSTVNIAESMMLGNISVGIAGGADSTSVSPIGVSKNLARALTDLQKTKTLGQKFNVLKKLGLKDLLPVPPAVAEYSTGLSMGQTAEQMAKSHSISRADQDKLAHRSHSLAAQSWNEGKLAGEVMTAYPAPYKSAFEKDNNIRFDSKLEGYAKLRPVFDKKHGTVTAANATPLTDGASAVLMMTESRAKALGYTPLGYIKSYAFAAIDVWEDMLMGPSYATPMALDRAGMTLNDLTLIEMHEAFAAQTLANIKMFASDKFAQEKLGRSKATGEIDMAKFNVMGSSLAYGHPFAATGTRMITQMLNELNRRGGGSGLLTACAAGGLAAAMIVETE.

Residue Cys-99 is the Acyl-thioester intermediate of the active site. Active-site proton acceptor residues include His-392 and Cys-422.

The protein belongs to the thiolase-like superfamily. Thiolase family. In terms of assembly, heterotetramer of two alpha chains (FadJ) and two beta chains (FadI).

The protein localises to the cytoplasm. It catalyses the reaction an acyl-CoA + acetyl-CoA = a 3-oxoacyl-CoA + CoA. The protein operates within lipid metabolism; fatty acid beta-oxidation. Catalyzes the final step of fatty acid oxidation in which acetyl-CoA is released and the CoA ester of a fatty acid two carbons shorter is formed. This Pseudoalteromonas atlantica (strain T6c / ATCC BAA-1087) protein is 3-ketoacyl-CoA thiolase.